Here is a 407-residue protein sequence, read N- to C-terminus: MEILNRLTLTDYIVFTSFILYLLFFLSPFLERKRLWTVAVTPLASIIGSGYLVSAPLLYYVLGKYAILGMAGIVILAYLIGGAIRYNIIKAEPILYGSESSKLKALLLDVERFSNLSLAFAYMISIAFYLRLLSSFVFSGFFERNEVYERLLTTGLLLFIGISGFIRRLHFLEFMEKYAVGLKLSIIFSFLTALLYYNYKNFSFAGEVKPFDLHSLEVLGGILLIVQGFETSKYLGEEYTPEERVKSMKLAQWISGFIYVSFMFLITSVFVHNPPKKLDETEIIFLASAVSLVLGYLLRFGPLMSQFSAAVADTIGAGGLIYEETNHRVSSRFGYLITTLVGVALVWSANVFEIIAYASKAFAFYYLLQTIIAWLVSFEKKDRLQFLVFTLLIPVLIFIVLFGKSVE.

11 helical membrane passes run 13–30, 40–62, 67–89, 118–140, 147–169, 179–199, 253–271, 281–303, 334–356, 361–378, and 385–402; these read IVFT…SPFL, VTPL…YYVL, ILGM…YNII, LAFA…VFSG, VYER…IRRL, AVGL…YYNY, WISG…SVFV, TEII…FGPL, GYLI…EIIA, AFAF…LVSF, and QFLV…IVLF.

Its subcellular location is the cell membrane. This is an uncharacterized protein from Aquifex aeolicus (strain VF5).